The primary structure comprises 307 residues: tRNA dimethylallyltransferase (307 aa).

6-13 (GATATGKT) contacts ATP. Residue 8–13 (TATGKT) coordinates substrate. Residues 31-34 (DSMM) form an interaction with substrate tRNA region.

It belongs to the IPP transferase family. In terms of assembly, monomer. The cofactor is Mg(2+).

It carries out the reaction adenosine(37) in tRNA + dimethylallyl diphosphate = N(6)-dimethylallyladenosine(37) in tRNA + diphosphate. Functionally, catalyzes the transfer of a dimethylallyl group onto the adenine at position 37 in tRNAs that read codons beginning with uridine, leading to the formation of N6-(dimethylallyl)adenosine (i(6)A). This Sulfurihydrogenibium sp. (strain YO3AOP1) protein is tRNA dimethylallyltransferase.